Reading from the N-terminus, the 527-residue chain is Amine oxidase [flavin-containing] A (527 aa).

N-acetylmethionine is present on M1. Over 1-497 (MERQEKANNA…RTFWERNLPS (497 aa)) the chain is Cytoplasmic. S383 is subject to Phosphoserine. C406 is subject to S-8alpha-FAD cysteine. A helical; Anchor for type IV membrane protein transmembrane segment spans residues 498 to 518 (VTGLLKIIGFSTSVTALWLAV). At 519–527 (YKFRLLTRS) the chain is on the mitochondrial intermembrane side. Positions 520–522 (KFR) are interaction with membrane phospholipid headgroups.

It belongs to the flavin monoamine oxidase family. In terms of assembly, monomer, homo- or heterodimer (containing two subunits of similar size). Each subunit contains a covalently bound flavin. Enzymatically active as monomer. The cofactor is FAD.

The protein localises to the mitochondrion outer membrane. The enzyme catalyses a secondary aliphatic amine + O2 + H2O = a primary amine + an aldehyde + H2O2. The catalysed reaction is a primary methyl amine + O2 + H2O = an aldehyde + H2O2 + NH4(+). It carries out the reaction (R)-adrenaline + O2 + H2O = (R)-3,4-dihydroxymandelaldehyde + methylamine + H2O2. It catalyses the reaction dopamine + O2 + H2O = 3,4-dihydroxyphenylacetaldehyde + H2O2 + NH4(+). The enzyme catalyses tyramine + O2 + H2O = (4-hydroxyphenyl)acetaldehyde + H2O2 + NH4(+). The catalysed reaction is (R)-noradrenaline + O2 + H2O = (R)-3,4-dihydroxymandelaldehyde + H2O2 + NH4(+). It carries out the reaction serotonin + O2 + H2O = (5-hydroxyindol-3-yl)acetaldehyde + H2O2 + NH4(+). It catalyses the reaction kynuramine + O2 + H2O = 3-(2-aminophenyl)-3-oxopropanal + H2O2 + NH4(+). The enzyme catalyses tryptamine + O2 + H2O = indole-3-acetaldehyde + H2O2 + NH4(+). The catalysed reaction is 2-phenylethylamine + O2 + H2O = 2-phenylacetaldehyde + H2O2 + NH4(+). Its function is as follows. Catalyzes the oxidative deamination of primary and some secondary amine such as neurotransmitters, with concomitant reduction of oxygen to hydrogen peroxide and has important functions in the metabolism of neuroactive and vasoactive amines in the central nervous system and peripheral tissues. Preferentially oxidizes serotonin. Also catalyzes the oxidative deamination of kynuramine to 3-(2-aminophenyl)-3-oxopropanal that can spontaneously condense to 4-hydroxyquinoline. In Sus scrofa (Pig), this protein is Amine oxidase [flavin-containing] A.